A 106-amino-acid chain; its full sequence is Large ribosomal subunit protein bL21 (106 aa).

Belongs to the bacterial ribosomal protein bL21 family. Part of the 50S ribosomal subunit. Contacts protein L20.

In terms of biological role, this protein binds to 23S rRNA in the presence of protein L20. The polypeptide is Large ribosomal subunit protein bL21 (Xylella fastidiosa (strain 9a5c)).